The following is a 102-amino-acid chain: Small ribosomal subunit protein uS10 (102 aa).

This sequence belongs to the universal ribosomal protein uS10 family. As to quaternary structure, part of the 30S ribosomal subunit.

Involved in the binding of tRNA to the ribosomes. The polypeptide is Small ribosomal subunit protein uS10 (Finegoldia magna (strain ATCC 29328 / DSM 20472 / WAL 2508) (Peptostreptococcus magnus)).